The chain runs to 283 residues: Pantothenate synthetase (283 aa).

30–37 (MGALHEGH) is an ATP binding site. H37 acts as the Proton donor in catalysis. Q61 provides a ligand contact to (R)-pantoate. Q61 serves as a coordination point for beta-alanine. 147–150 (GMKD) is a binding site for ATP. Q153 lines the (R)-pantoate pocket. Residues V176 and 184-187 (LSSR) contribute to the ATP site.

This sequence belongs to the pantothenate synthetase family. Homodimer.

It is found in the cytoplasm. The enzyme catalyses (R)-pantoate + beta-alanine + ATP = (R)-pantothenate + AMP + diphosphate + H(+). It functions in the pathway cofactor biosynthesis; (R)-pantothenate biosynthesis; (R)-pantothenate from (R)-pantoate and beta-alanine: step 1/1. Its function is as follows. Catalyzes the condensation of pantoate with beta-alanine in an ATP-dependent reaction via a pantoyl-adenylate intermediate. The protein is Pantothenate synthetase of Endomicrobium trichonymphae.